The following is a 159-amino-acid chain: Small ribosomal subunit protein uS15 (159 aa).

Residues 1 to 16 (MNKRKEKGKSHSKRPV) are compositionally biased toward basic residues. The segment at 1–22 (MNKRKEKGKSHSKRPVRNTPPR) is disordered.

Belongs to the universal ribosomal protein uS15 family. As to quaternary structure, part of the 30S ribosomal subunit.

The protein is Small ribosomal subunit protein uS15 of Ignicoccus hospitalis (strain KIN4/I / DSM 18386 / JCM 14125).